Reading from the N-terminus, the 182-residue chain is ATP synthase subunit delta (182 aa).

It belongs to the ATPase delta chain family. As to quaternary structure, F-type ATPases have 2 components, F(1) - the catalytic core - and F(0) - the membrane proton channel. F(1) has five subunits: alpha(3), beta(3), gamma(1), delta(1), epsilon(1). CF(0) has four main subunits: a(1), b(1), b'(1) and c(10-14). The alpha and beta chains form an alternating ring which encloses part of the gamma chain. F(1) is attached to F(0) by a central stalk formed by the gamma and epsilon chains, while a peripheral stalk is formed by the delta, b and b' chains.

The protein resides in the cellular thylakoid membrane. Functionally, f(1)F(0) ATP synthase produces ATP from ADP in the presence of a proton or sodium gradient. F-type ATPases consist of two structural domains, F(1) containing the extramembraneous catalytic core and F(0) containing the membrane proton channel, linked together by a central stalk and a peripheral stalk. During catalysis, ATP synthesis in the catalytic domain of F(1) is coupled via a rotary mechanism of the central stalk subunits to proton translocation. This protein is part of the stalk that links CF(0) to CF(1). It either transmits conformational changes from CF(0) to CF(1) or is implicated in proton conduction. In Prochlorococcus marinus (strain NATL1A), this protein is ATP synthase subunit delta.